We begin with the raw amino-acid sequence, 247 residues long: Coproheme decarboxylase (247 aa).

Residues Arg-129, 143–147 (YPMDK), His-170, Gln-183, and Ser-221 contribute to the Fe-coproporphyrin III site. The active site involves Tyr-143.

The protein belongs to the ChdC family. Type 1 subfamily. Fe-coproporphyrin III is required as a cofactor.

The enzyme catalyses Fe-coproporphyrin III + 2 H2O2 + 2 H(+) = heme b + 2 CO2 + 4 H2O. It catalyses the reaction Fe-coproporphyrin III + H2O2 + H(+) = harderoheme III + CO2 + 2 H2O. The catalysed reaction is harderoheme III + H2O2 + H(+) = heme b + CO2 + 2 H2O. It participates in porphyrin-containing compound metabolism; protoheme biosynthesis. Functionally, involved in coproporphyrin-dependent heme b biosynthesis. Catalyzes the decarboxylation of Fe-coproporphyrin III (coproheme) to heme b (protoheme IX), the last step of the pathway. The reaction occurs in a stepwise manner with a three-propionate intermediate. In Bacillus anthracis, this protein is Coproheme decarboxylase.